The chain runs to 250 residues: MADS-box transcription factor 47 (250 aa).

A compositionally biased stretch (gly residues) spans 1–10 (MAGGGGGGGR). Disordered stretches follow at residues 1–20 (MAGG…AATG) and 196–250 (SRME…FSSK). The segment covering 11 to 20 (GEGEGRAATG) has biased composition (basic and acidic residues). The MADS-box domain occupies 20–80 (GKRERIAIRR…GKLFQFASTS (61 aa)). In terms of domain architecture, K-box spans 106 to 198 (QGEDSSTCAR…QLQVSRMSRM (93 aa)). A compositionally biased stretch (polar residues) spans 214–224 (GQSSESVTNAS).

May interact with MADS18. As to expression, expressed in roots, shoots and developing panicles. Expressed in mature stems and leaves, flowering panicles, developing seeds, and mature seeds.

It is found in the nucleus. Transcription factor that modulates expressions of multiple genes involved in cell signaling and gene transcription. Plays a negative regulatory role in brassinosteroid signaling. The protein is MADS-box transcription factor 47 of Oryza sativa subsp. japonica (Rice).